The chain runs to 405 residues: Acetate kinase (405 aa).

Position 7 (N7) interacts with Mg(2+). K14 provides a ligand contact to ATP. Residue R98 coordinates substrate. D156 functions as the Proton donor/acceptor in the catalytic mechanism. ATP contacts are provided by residues 215-219 (HLGNG), 290-292 (DLR), and 338-342 (GVGEN). Residue E391 coordinates Mg(2+).

It belongs to the acetokinase family. Homodimer. The cofactor is Mg(2+). It depends on Mn(2+) as a cofactor.

It localises to the cytoplasm. It catalyses the reaction acetate + ATP = acetyl phosphate + ADP. It functions in the pathway metabolic intermediate biosynthesis; acetyl-CoA biosynthesis; acetyl-CoA from acetate: step 1/2. Its function is as follows. Catalyzes the formation of acetyl phosphate from acetate and ATP. Can also catalyze the reverse reaction. The polypeptide is Acetate kinase (Gloeobacter violaceus (strain ATCC 29082 / PCC 7421)).